The primary structure comprises 335 residues: Phosphatidylglycerol--prolipoprotein diacylglyceryl transferase (335 aa).

3 helical membrane passes run 31–51 (IYWY…TYSL), 67–87 (YIFL…LAIG), and 100–120 (LAIQ…FPLI). Arg163 is a binding site for a 1,2-diacyl-sn-glycero-3-phospho-(1'-sn-glycerol). The next 3 helical transmembrane spans lie at 213-233 (PLFL…YFGL), 235-255 (YIKQ…YGVT), and 277-297 (SLLL…APLL).

This sequence belongs to the Lgt family.

It localises to the cell membrane. It catalyses the reaction L-cysteinyl-[prolipoprotein] + a 1,2-diacyl-sn-glycero-3-phospho-(1'-sn-glycerol) = an S-1,2-diacyl-sn-glyceryl-L-cysteinyl-[prolipoprotein] + sn-glycerol 1-phosphate + H(+). It functions in the pathway protein modification; lipoprotein biosynthesis (diacylglyceryl transfer). Catalyzes the transfer of the diacylglyceryl group from phosphatidylglycerol to the sulfhydryl group of the N-terminal cysteine of a prolipoprotein, the first step in the formation of mature lipoproteins. This Ureaplasma parvum serovar 3 (strain ATCC 27815 / 27 / NCTC 11736) protein is Phosphatidylglycerol--prolipoprotein diacylglyceryl transferase.